The sequence spans 138 residues: Transcription factor Atoh7-b (138 aa).

The bHLH domain maps to 33 to 85 (KRRLAANARERRRMQGLNTAFDSLRKVVPQWGEDKKLSKYETLQMALSYIMAL).

It localises to the nucleus. The protein localises to the perikaryon. It is found in the cell projection. The protein resides in the axon. Its function is as follows. Transcription factor that binds to DNA at the consensus sequence 5'-CAG[GC]TG-3'. Positively regulates the determination of retinal ganglion cell fate and formation of the optic nerve and retino-hypothalamic tract. Required for retinal circadian rhythm photoentrainment. Plays a role in brainstem auditory signaling and binaural processing. Regulates the differentiation of olfactory receptor neurons. During retinal neurogenesis, activates the transcription of several genes such as brn3d, coe3, cbfa2t2, glis2, elrC and xgadd45-gamma. The chain is Transcription factor Atoh7-b from Xenopus laevis (African clawed frog).